The chain runs to 601 residues: DNA topoisomerase I, mitochondrial (601 aa).

Residues 1–50 constitute a mitochondrion transit peptide; sequence MRVVRLLRLRAALTLLGEVPRRPASRGVPGSRRTQKGSGARWEKEKHEDG. The interval 22-48 is disordered; sequence RPASRGVPGSRRTQKGSGARWEKEKHE. Interaction with DNA stretches follow at residues 261 to 262, 324 to 329, and 421 to 423; these read KY, RAGNEK, and TAK. Residues 268 to 601 enclose the Topo IB-type catalytic domain; the sequence is CSKLKGETAW…LAMAGEDFEF (334 aa). Tyr-559 serves as the catalytic O-(3'-phospho-DNA)-tyrosine intermediate.

Belongs to the type IB topoisomerase family. The cofactor is Ca(2+). It depends on Mg(2+) as a cofactor.

The protein resides in the mitochondrion. The catalysed reaction is ATP-independent breakage of single-stranded DNA, followed by passage and rejoining.. Its function is as follows. Releases the supercoiling and torsional tension of DNA introduced during duplication of mitochondrial DNA by transiently cleaving and rejoining one strand of the DNA duplex. Introduces a single-strand break via transesterification at a target site in duplex DNA. The scissile phosphodiester is attacked by the catalytic tyrosine of the enzyme, resulting in the formation of a DNA-(3'-phosphotyrosyl)-enzyme intermediate and the expulsion of a 5'-OH DNA strand. The free DNA strand then rotates around the intact phosphodiester bond on the opposing strand, thus removing DNA supercoils. Finally, in the religation step, the DNA 5'-OH attacks the covalent intermediate to expel the active-site tyrosine and restore the DNA phosphodiester backbone. This Pan troglodytes (Chimpanzee) protein is DNA topoisomerase I, mitochondrial (TOP1MT).